Consider the following 392-residue polypeptide: Acetyl-CoA acetyltransferase (392 aa).

The active-site Acyl-thioester intermediate is the Cys89. Catalysis depends on proton acceptor residues His348 and Cys378.

It belongs to the thiolase-like superfamily. Thiolase family. Homotetramer.

The protein resides in the cytoplasm. The enzyme catalyses 2 acetyl-CoA = acetoacetyl-CoA + CoA. It functions in the pathway biopolymer metabolism; poly-(R)-3-hydroxybutanoate biosynthesis. The protein operates within metabolic intermediate biosynthesis; (R)-mevalonate biosynthesis; (R)-mevalonate from acetyl-CoA: step 1/3. The chain is Acetyl-CoA acetyltransferase from Shinella zoogloeoides (Crabtreella saccharophila).